We begin with the raw amino-acid sequence, 1585 residues long: Maestro heat-like repeat-containing protein family member 2B (1585 aa).

HEAT repeat units follow at residues 28 to 65 (VNKE…DMRD), 228 to 263 (GYAL…AAVL), 272 to 309 (LRRS…LAHS), 310 to 346 (NPGE…ADEP), 405 to 445 (TLNR…LVIG), 531 to 569 (IGLL…STVL), 572 to 611 (TMLL…NSTE), 662 to 699 (ENHL…LTKT), 777 to 819 (SYKE…LKPQ), 964 to 1001 (HLEV…KFIP), 1021 to 1059 (PTCT…HMPV), 1112 to 1151 (ASSG…VISM), 1157 to 1195 (GLYP…QGEQ), 1258 to 1295 (GVIL…EPIL), and 1363 to 1402 (CESL…EQDD).

As to quaternary structure, found in a complex at least composed of MROH2B, PRKACA isoform 2 and TCP11. Interacts with PRKACA. Interacts with TCP11. Constitutively phosphorylated on serine and threonine residues in acrosomal region of the sperm head, midpiece and flagellar regions of noncapacitated spermatozoa. Phosphorylation on tyrosine residues increases upon sperm capacitation within the acrosomal and tail regions in a protein kinase A (PKA)-dependent signaling pathway.

Its subcellular location is the cytoplasm. It is found in the cytoplasmic vesicle. The protein resides in the secretory vesicle. It localises to the acrosome. The protein localises to the cell projection. Its subcellular location is the cilium. It is found in the flagellum. In terms of biological role, may play a role in the process of sperm capacitation. This chain is Maestro heat-like repeat-containing protein family member 2B, found in Homo sapiens (Human).